The primary structure comprises 209 residues: Large ribosomal subunit protein uL3 (209 aa).

The disordered stretch occupies residues 121–154 (GGIKRHNFHRGPMAHGSKYHRRPGSSAAKGPART).

Belongs to the universal ribosomal protein uL3 family. In terms of assembly, part of the 50S ribosomal subunit. Forms a cluster with proteins L14 and L19.

Its function is as follows. One of the primary rRNA binding proteins, it binds directly near the 3'-end of the 23S rRNA, where it nucleates assembly of the 50S subunit. This chain is Large ribosomal subunit protein uL3, found in Desulforamulus reducens (strain ATCC BAA-1160 / DSM 100696 / MI-1) (Desulfotomaculum reducens).